The primary structure comprises 255 residues: Ribosomal RNA small subunit methyltransferase J (255 aa).

Residues 107–108 (RD), 123–124 (ER), and D178 each bind S-adenosyl-L-methionine. Positions 228-247 (ARAEPLSGRKPSHQIPGKTT) are disordered.

It belongs to the methyltransferase superfamily. RsmJ family.

It is found in the cytoplasm. The catalysed reaction is guanosine(1516) in 16S rRNA + S-adenosyl-L-methionine = N(2)-methylguanosine(1516) in 16S rRNA + S-adenosyl-L-homocysteine + H(+). Its function is as follows. Specifically methylates the guanosine in position 1516 of 16S rRNA. The sequence is that of Ribosomal RNA small subunit methyltransferase J from Thioalkalivibrio sulfidiphilus (strain HL-EbGR7).